We begin with the raw amino-acid sequence, 565 residues long: Transcription factor asqA (565 aa).

Residues 204 to 273 form a fungal transcription factor domain region; the sequence is MDTAMAQAVR…HSMPALCIDS (70 aa).

The protein localises to the nucleus. Transcription factor that regulates specifically the 4'-methoxyviridicatin/aspoquinolone biosynthesis cluster. The polypeptide is Transcription factor asqA (Emericella nidulans (strain FGSC A4 / ATCC 38163 / CBS 112.46 / NRRL 194 / M139) (Aspergillus nidulans)).